The following is a 117-amino-acid chain: Ig heavy chain V region MOPC 173 (117 aa).

The Ig-like domain occupies 1-116 (EVKLLESGGP…WGQGTSVTVS (116 aa)). Cys-22 and Cys-96 are oxidised to a cystine.

This chain is Ig heavy chain V region MOPC 173, found in Mus musculus (Mouse).